The following is a 398-amino-acid chain: Dihydrolipoyllysine-residue acetyltransferase component of acetoin cleaving system (398 aa).

The 76-residue stretch at 2-77 (AVKVVMPKLG…PPGTAICYIG (76 aa)) folds into the Lipoyl-binding domain. The residue at position 43 (K43) is an N6-lipoyllysine. Residues 118–155 (KISPVARKIAEKAGLDLKQLKGTGPGGRIVKDDVTKAL) form the Peripheral subunit-binding (PSBD) domain. Active-site residues include H371 and D375.

The protein belongs to the 2-oxoacid dehydrogenase family. The cofactor is (R)-lipoate.

The catalysed reaction is N(6)-[(R)-dihydrolipoyl]-L-lysyl-[protein] + acetyl-CoA = N(6)-[(R)-S(8)-acetyldihydrolipoyl]-L-lysyl-[protein] + CoA. It participates in ketone degradation; acetoin degradation. The sequence is that of Dihydrolipoyllysine-residue acetyltransferase component of acetoin cleaving system (acoC) from Bacillus subtilis (strain 168).